The chain runs to 186 residues: Type 1 phosphatases regulator ypi-1 (186 aa).

Positions 1–32 are enriched in polar residues; the sequence is MTSVAQRQAQPAQPSTSQTAAPTRTQTETSSP. The interval 1-186 is disordered; sequence MTSVAQRQAQ…SETQGPGGSK (186 aa). Low complexity predominate over residues 82-94; the sequence is DSSSSSDSSSSSD. Residues 122–137 show a composition bias toward basic and acidic residues; sequence HDHDHDGREGGCNHDH. Residues 138 to 151 are compositionally biased toward basic residues; that stretch reads GRGRKHGNKGKKTE.

The protein belongs to the YPI1 family.

The protein resides in the nucleus. Its function is as follows. Regulator of type 1 phosphatases which maintains protein phosphatase activity under strict control. The sequence is that of Type 1 phosphatases regulator ypi-1 (ypi-1) from Neurospora crassa (strain ATCC 24698 / 74-OR23-1A / CBS 708.71 / DSM 1257 / FGSC 987).